The following is a 210-amino-acid chain: MELHDIREDYTKRELSEKHCAADPIKQFEKWLKEAIWAKVNEPTAMNIATVGENGKPTSRVVLLKEVNAQGFVFFTNYLSRKGKSLAANPFAALNFFWPELERQVRVEGHVVKLDEIKSDEYFASRPYTSRVGAWASEQSAVISGKNVLLAKAALVAAQHPLNVPRPPHWGGYIVEPDTIEFWQGRPSRLHDRIRYRLENQIWVKERLSP.

Substrate is bound by residues 7–10 (REDY) and K65. FMN contacts are provided by residues 60–65 (RVVLLK), 75–76 (FT), R81, K82, and Q104. 3 residues coordinate substrate: Y122, R126, and S130. FMN-binding positions include 139 to 140 (QS) and W183. Residue 189 to 191 (RLH) coordinates substrate. FMN is bound at residue R193.

This sequence belongs to the pyridoxamine 5'-phosphate oxidase family. As to quaternary structure, homodimer. It depends on FMN as a cofactor.

It catalyses the reaction pyridoxamine 5'-phosphate + O2 + H2O = pyridoxal 5'-phosphate + H2O2 + NH4(+). It carries out the reaction pyridoxine 5'-phosphate + O2 = pyridoxal 5'-phosphate + H2O2. The protein operates within cofactor metabolism; pyridoxal 5'-phosphate salvage; pyridoxal 5'-phosphate from pyridoxamine 5'-phosphate: step 1/1. It participates in cofactor metabolism; pyridoxal 5'-phosphate salvage; pyridoxal 5'-phosphate from pyridoxine 5'-phosphate: step 1/1. Its function is as follows. Catalyzes the oxidation of either pyridoxine 5'-phosphate (PNP) or pyridoxamine 5'-phosphate (PMP) into pyridoxal 5'-phosphate (PLP). The polypeptide is Pyridoxine/pyridoxamine 5'-phosphate oxidase (Actinobacillus succinogenes (strain ATCC 55618 / DSM 22257 / CCUG 43843 / 130Z)).